Consider the following 493-residue polypeptide: Uridine 5'-monophosphate synthase (493 aa).

An OPRTase region spans residues 1 to 207 (MVAQNSDKMR…VAKYIAAVQI (207 aa)). The interval 208 to 233 (NSDGTFVGGDKGDVVRANDLQRTKLT) is domain linker. An OMPdecase region spans residues 234 to 493 (YENRANLAKS…WAAYQDRVAK (260 aa)). Lys320 is a catalytic residue.

In the N-terminal section; belongs to the purine/pyrimidine phosphoribosyltransferase family. The protein in the C-terminal section; belongs to the OMP decarboxylase family.

The enzyme catalyses orotidine 5'-phosphate + diphosphate = orotate + 5-phospho-alpha-D-ribose 1-diphosphate. It carries out the reaction orotidine 5'-phosphate + H(+) = UMP + CO2. The protein operates within pyrimidine metabolism; UMP biosynthesis via de novo pathway; UMP from orotate: step 1/2. It functions in the pathway pyrimidine metabolism; UMP biosynthesis via de novo pathway; UMP from orotate: step 2/2. This chain is Uridine 5'-monophosphate synthase (r-l), found in Drosophila melanogaster (Fruit fly).